Here is a 47-residue protein sequence, read N- to C-terminus: Lysis protein for colicin E7 (47 aa).

The signal sequence occupies residues Met-1–Ala-19. Residue Cys-20 is the site of N-palmitoyl cysteine attachment. Residue Cys-20 is the site of S-diacylglycerol cysteine attachment.

It is found in the cell outer membrane. Its function is as follows. Lysis proteins are required for both colicin release and partial cell lysis. This Escherichia coli protein is Lysis protein for colicin E7 (lys).